The following is a 257-amino-acid chain: UPF0246 protein Shal_1126 (257 aa).

Belongs to the UPF0246 family.

The protein is UPF0246 protein Shal_1126 of Shewanella halifaxensis (strain HAW-EB4).